The following is a 197-amino-acid chain: Recombination protein RecR (197 aa).

The C4-type zinc finger occupies 56-71 (CSVCGNFDTIDPCAIC). In terms of domain architecture, Toprim spans 79 to 174 (SMLCVVEDVA…TVSGLAHGVP (96 aa)).

This sequence belongs to the RecR family.

May play a role in DNA repair. It seems to be involved in an RecBC-independent recombinational process of DNA repair. It may act with RecF and RecO. The polypeptide is Recombination protein RecR (Paramagnetospirillum magneticum (strain ATCC 700264 / AMB-1) (Magnetospirillum magneticum)).